The primary structure comprises 453 residues: MHAHVILAAGQGTRMRSRLPKVLHPLLGKPMLLYALEAALALKPERLVVVVGHGGEKVVEALEGYPVEVAWQKEQLGTAHALLQAEGLLRDFPGPFLVTQGDTPLLSPRTLEALLRRVREGAGMALLTAELPDPTGYGRILREGEEVLGNVEEKDAPPEVRAIREVNAGAYAFDGFLFQALKEVRNENAAREYYLPDLIAIYRAHGRRVLAVRGVAEEALGVNTREELARVEGVLLRRLRAEWMGKGVRMILPETIYLEPSVELAPDVTLWPGAVLKGKTRIGEGCEVGPYAVLEDTVLEPGAKVLAHTVAQGAHLHPGASAGPFARLRPGAVLMEEVHVGNFVEVKNSLLHKGVKAGHLAYLGDAEVGEGTNIGAGVITANYDGKRKHKTEIGKKAFIGSNSVLVAPVRVGDRALVGAGSVITQDVPEGALAVARERQKNLEGYALRKLGEG.

A pyrophosphorylase region spans residues 1 to 225 (MHAHVILAAG…AEEALGVNTR (225 aa)). UDP-N-acetyl-alpha-D-glucosamine contacts are provided by residues 7–10 (LAAG), Lys-21, Gln-72, and 77–78 (GT). Asp-102 is a binding site for Mg(2+). The UDP-N-acetyl-alpha-D-glucosamine site is built by Gly-138, Glu-152, Asn-167, and Asn-223. Asn-223 provides a ligand contact to Mg(2+). A linker region spans residues 226-246 (EELARVEGVLLRRLRAEWMGK). The N-acetyltransferase stretch occupies residues 247–453 (GVRMILPETI…GYALRKLGEG (207 aa)). 2 residues coordinate UDP-N-acetyl-alpha-D-glucosamine: Arg-329 and Lys-347. The Proton acceptor role is filled by His-359. UDP-N-acetyl-alpha-D-glucosamine-binding residues include Tyr-362 and Asn-373. Residues Ala-376, 382–383 (NY), Ser-401, Ala-419, and Arg-436 each bind acetyl-CoA.

The protein in the N-terminal section; belongs to the N-acetylglucosamine-1-phosphate uridyltransferase family. It in the C-terminal section; belongs to the transferase hexapeptide repeat family. Homotrimer. Requires Mg(2+) as cofactor.

Its subcellular location is the cytoplasm. The catalysed reaction is alpha-D-glucosamine 1-phosphate + acetyl-CoA = N-acetyl-alpha-D-glucosamine 1-phosphate + CoA + H(+). It catalyses the reaction N-acetyl-alpha-D-glucosamine 1-phosphate + UTP + H(+) = UDP-N-acetyl-alpha-D-glucosamine + diphosphate. It functions in the pathway nucleotide-sugar biosynthesis; UDP-N-acetyl-alpha-D-glucosamine biosynthesis; N-acetyl-alpha-D-glucosamine 1-phosphate from alpha-D-glucosamine 6-phosphate (route II): step 2/2. Its pathway is nucleotide-sugar biosynthesis; UDP-N-acetyl-alpha-D-glucosamine biosynthesis; UDP-N-acetyl-alpha-D-glucosamine from N-acetyl-alpha-D-glucosamine 1-phosphate: step 1/1. The protein operates within bacterial outer membrane biogenesis; LPS lipid A biosynthesis. Its function is as follows. Catalyzes the last two sequential reactions in the de novo biosynthetic pathway for UDP-N-acetylglucosamine (UDP-GlcNAc). The C-terminal domain catalyzes the transfer of acetyl group from acetyl coenzyme A to glucosamine-1-phosphate (GlcN-1-P) to produce N-acetylglucosamine-1-phosphate (GlcNAc-1-P), which is converted into UDP-GlcNAc by the transfer of uridine 5-monophosphate (from uridine 5-triphosphate), a reaction catalyzed by the N-terminal domain. This is Bifunctional protein GlmU from Thermus thermophilus (strain ATCC 27634 / DSM 579 / HB8).